The chain runs to 596 residues: MASSASLQRFLPPYPHAAASRCRPPGVRARPVQSSTVSAPSSSTPAADEAVSAERLEPRVEQREGRYWVLKEKYRTGLNPQEKVKLGKEPMSLFMEGGIKELAKMPMEEIEADKLSKEDIDVRLKWLGLFHRRKHQYGRFMMRLKLPNGVTTSEQTRYLASVIEAYGKEGCADVTTRQNWQIRGVTLPDVPAILDGLNAVGLTSLQSGMDNVRNPVGNPLAGIDPDEIVDTRSYTNLLSSYITSNFQGNPTITNLPRKWNVCVIGSHDLYEHPHINDLAYMPAVKGGKFGFNLLVGGFISPKRWEEALPLDAWVPGDDIIPVCKAVLEAYRDLGTRGNRQKTRMMWLIDELGMEAFRSEVEKRMPNGVLERAAPEDLIDKKWQRRDYLGVHPQKQEGMSYVGLHVPVGRVQAADMFELARLADEYGSGELRLTVEQNIVIPNVKNEKVEALLSEPLLQKFSPQPSLLLKGLVACTGNQFCGQAIIETKQRALLVTSQVEKLVSVPRAVRMHWTGCPNSCGQVQVADIGFMGCLTKDSAGKIVEAADIFVGGRVGSDSHLAGAYKKSVPCDELAPIVADILVERFGAVRREREEDEE.

The transit peptide at 1 to 28 directs the protein to the chloroplast; that stretch reads MASSASLQRFLPPYPHAAASRCRPPGVR. The segment at 1–56 is disordered; the sequence is MASSASLQRFLPPYPHAAASRCRPPGVRARPVQSSTVSAPSSSTPAADEAVSAERL. A compositionally biased stretch (low complexity) spans 31-47; that stretch reads PVQSSTVSAPSSSTPAA. [4Fe-4S] cluster is bound by residues C474, C480, C515, and C519. A siroheme-binding site is contributed by C519.

It belongs to the nitrite and sulfite reductase 4Fe-4S domain family. In terms of assembly, monomer. Requires siroheme as cofactor. [4Fe-4S] cluster serves as cofactor.

It is found in the plastid. Its subcellular location is the chloroplast. The catalysed reaction is 6 oxidized [2Fe-2S]-[ferredoxin] + NH4(+) + 2 H2O = nitrite + 6 reduced [2Fe-2S]-[ferredoxin] + 8 H(+). The protein operates within nitrogen metabolism; nitrate reduction (assimilation). Functionally, catalyzes the six-electron reduction of nitrite to ammonium. In Oryza sativa subsp. japonica (Rice), this protein is Ferredoxin--nitrite reductase, chloroplastic.